Reading from the N-terminus, the 138-residue chain is Large ribosomal subunit protein bL19 (138 aa).

Belongs to the bacterial ribosomal protein bL19 family.

This protein is located at the 30S-50S ribosomal subunit interface and may play a role in the structure and function of the aminoacyl-tRNA binding site. The protein is Large ribosomal subunit protein bL19 of Leptospira interrogans serogroup Icterohaemorrhagiae serovar copenhageni (strain Fiocruz L1-130).